We begin with the raw amino-acid sequence, 46 residues long: Esculentin-1A (46 aa).

C40 and C46 are oxidised to a cystine.

This sequence belongs to the frog skin active peptide (FSAP) family. Brevinin subfamily. Expressed by the skin glands.

It localises to the secreted. Its function is as follows. Shows antibacterial activity against representative Gram-negative and Gram-positive bacterial species, and hemolytic activity. This chain is Esculentin-1A, found in Pelophylax lessonae (Pool frog).